The following is a 404-amino-acid chain: Histidine--tRNA ligase (404 aa).

This sequence belongs to the class-II aminoacyl-tRNA synthetase family.

It localises to the cytoplasm. It carries out the reaction tRNA(His) + L-histidine + ATP = L-histidyl-tRNA(His) + AMP + diphosphate + H(+). The sequence is that of Histidine--tRNA ligase from Nanoarchaeum equitans (strain Kin4-M).